The sequence spans 219 residues: Orotate phosphoribosyltransferase (219 aa).

Lysine 26 lines the 5-phospho-alpha-D-ribose 1-diphosphate pocket. 34–35 (FF) is an orotate binding site. 5-phospho-alpha-D-ribose 1-diphosphate is bound by residues 72–73 (YK), arginine 98, lysine 99, lysine 102, histidine 104, and 124–132 (DDVITAGTA). The orotate site is built by threonine 128 and arginine 156.

Belongs to the purine/pyrimidine phosphoribosyltransferase family. PyrE subfamily. As to quaternary structure, homodimer. Mg(2+) serves as cofactor.

It carries out the reaction orotidine 5'-phosphate + diphosphate = orotate + 5-phospho-alpha-D-ribose 1-diphosphate. The protein operates within pyrimidine metabolism; UMP biosynthesis via de novo pathway; UMP from orotate: step 1/2. Functionally, catalyzes the transfer of a ribosyl phosphate group from 5-phosphoribose 1-diphosphate to orotate, leading to the formation of orotidine monophosphate (OMP). The protein is Orotate phosphoribosyltransferase of Xylella fastidiosa (strain Temecula1 / ATCC 700964).